The sequence spans 162 residues: SsrA-binding protein (162 aa).

It belongs to the SmpB family.

The protein resides in the cytoplasm. Required for rescue of stalled ribosomes mediated by trans-translation. Binds to transfer-messenger RNA (tmRNA), required for stable association of tmRNA with ribosomes. tmRNA and SmpB together mimic tRNA shape, replacing the anticodon stem-loop with SmpB. tmRNA is encoded by the ssrA gene; the 2 termini fold to resemble tRNA(Ala) and it encodes a 'tag peptide', a short internal open reading frame. During trans-translation Ala-aminoacylated tmRNA acts like a tRNA, entering the A-site of stalled ribosomes, displacing the stalled mRNA. The ribosome then switches to translate the ORF on the tmRNA; the nascent peptide is terminated with the 'tag peptide' encoded by the tmRNA and targeted for degradation. The ribosome is freed to recommence translation, which seems to be the essential function of trans-translation. The polypeptide is SsrA-binding protein (Granulibacter bethesdensis (strain ATCC BAA-1260 / CGDNIH1)).